The sequence spans 333 residues: Aspartate carbamoyltransferase catalytic subunit (333 aa).

Residues Arg61 and Thr62 each coordinate carbamoyl phosphate. L-aspartate is bound at residue Lys89. 3 residues coordinate carbamoyl phosphate: Arg111, His144, and Gln147. Arg184 and Arg248 together coordinate L-aspartate. Positions 289 and 290 each coordinate carbamoyl phosphate.

Belongs to the aspartate/ornithine carbamoyltransferase superfamily. ATCase family. Heterododecamer (2C3:3R2) of six catalytic PyrB chains organized as two trimers (C3), and six regulatory PyrI chains organized as three dimers (R2).

It carries out the reaction carbamoyl phosphate + L-aspartate = N-carbamoyl-L-aspartate + phosphate + H(+). It functions in the pathway pyrimidine metabolism; UMP biosynthesis via de novo pathway; (S)-dihydroorotate from bicarbonate: step 2/3. Catalyzes the condensation of carbamoyl phosphate and aspartate to form carbamoyl aspartate and inorganic phosphate, the committed step in the de novo pyrimidine nucleotide biosynthesis pathway. The chain is Aspartate carbamoyltransferase catalytic subunit from Trichormus variabilis (strain ATCC 29413 / PCC 7937) (Anabaena variabilis).